Reading from the N-terminus, the 937-residue chain is AP-2 complex subunit beta (937 aa).

T2 carries the post-translational modification N-acetylthreonine. Residue S4 is modified to Phosphoserine. K265 carries the post-translational modification N6-acetyllysine. The tract at residues 593 to 617 (LPIHHGSTDAGDSPVGTTTTTNLEQ) is disordered. Over residues 607 to 617 (VGTTTTTNLEQ) the composition is skewed to polar residues. 2 positions are modified to phosphotyrosine: Y737 and Y928.

This sequence belongs to the adaptor complexes large subunit family. As to quaternary structure, adaptor protein complex 2 (AP-2) is a heterotetramer composed of two large adaptins (alpha-type subunit AP2A1 or AP2A2 and beta-type subunit AP2B1), a medium adaptin (mu-type subunit AP2M1) and a small adaptin (sigma-type subunit AP2S1). Interacts with EPN1. Interacts with EPS15; clathrin competes with EPS15. Interacts with SNAP91; clathrin competes with SNAP91. Interacts with CLTC; clathrin competes with EPS15, SNAP91 and PIP5K1C. Interacts with LDLRAP1. Interacts with AMPH and BIN1. Interacts with ARF6 (GDP-bound). Interacts (dephosphorylated at Tyr-737) with ARRB1; phosphorylation of AP2B1 at Tyr-737 disrupts the interaction. Interacts with SLC2A8. Interacts with SCYL1 and SCYL2. Interacts with TGFBR1 and TGFBR2. Interacts with PIP5K1C; clathrin competes with PIP5K1C. Interacts with DENND1B. Interacts with FCHO1. Interacts with RFTN1. Interacts with KIAA1107. Together with AP2A1 or AP2A2 and AP2M1, it interacts with ADAM10; this interaction facilitates ADAM10 endocytosis from the plasma membrane during long-term potentiation in hippocampal neurons. In terms of tissue distribution, expressed in the brain (at protein level).

It is found in the cell membrane. The protein localises to the membrane. The protein resides in the coated pit. Its function is as follows. Component of the adaptor protein complex 2 (AP-2). Adaptor protein complexes function in protein transport via transport vesicles in different membrane traffic pathways. Adaptor protein complexes are vesicle coat components and appear to be involved in cargo selection and vesicle formation. AP-2 is involved in clathrin-dependent endocytosis in which cargo proteins are incorporated into vesicles surrounded by clathrin (clathrin-coated vesicles, CCVs) which are destined for fusion with the early endosome. The clathrin lattice serves as a mechanical scaffold but is itself unable to bind directly to membrane components. Clathrin-associated adaptor protein (AP) complexes which can bind directly to both the clathrin lattice and to the lipid and protein components of membranes are considered to be the major clathrin adaptors contributing the CCV formation. AP-2 also serves as a cargo receptor to selectively sort the membrane proteins involved in receptor-mediated endocytosis. AP-2 seems to play a role in the recycling of synaptic vesicle membranes from the presynaptic surface. AP-2 recognizes Y-X-X-[FILMV] (Y-X-X-Phi) and [ED]-X-X-X-L-[LI] endocytosis signal motifs within the cytosolic tails of transmembrane cargo molecules. AP-2 may also play a role in maintaining normal post-endocytic trafficking through the ARF6-regulated, non-clathrin pathway. During long-term potentiation in hippocampal neurons, AP-2 is responsible for the endocytosis of ADAM10. The AP-2 beta subunit acts via its C-terminal appendage domain as a scaffolding platform for endocytic accessory proteins; at least some clathrin-associated sorting proteins (CLASPs) are recognized by their [DE]-X(1,2)-F-X-X-[FL]-X-X-X-R motif. The AP-2 beta subunit binds to clathrin heavy chain, promoting clathrin lattice assembly; clathrin displaces at least some CLASPs from AP2B1 which probably then can be positioned for further coat assembly. This Mus musculus (Mouse) protein is AP-2 complex subunit beta (Ap2b1).